Reading from the N-terminus, the 179-residue chain is Large ribosomal subunit protein uL5 (179 aa).

It belongs to the universal ribosomal protein uL5 family. As to quaternary structure, part of the 50S ribosomal subunit; part of the 5S rRNA/L5/L18/L25 subcomplex. Contacts the 5S rRNA and the P site tRNA. Forms a bridge to the 30S subunit in the 70S ribosome.

This is one of the proteins that bind and probably mediate the attachment of the 5S RNA into the large ribosomal subunit, where it forms part of the central protuberance. In the 70S ribosome it contacts protein S13 of the 30S subunit (bridge B1b), connecting the 2 subunits; this bridge is implicated in subunit movement. Contacts the P site tRNA; the 5S rRNA and some of its associated proteins might help stabilize positioning of ribosome-bound tRNAs. The protein is Large ribosomal subunit protein uL5 of Burkholderia mallei (strain NCTC 10247).